Reading from the N-terminus, the 394-residue chain is Elongation factor Tu (394 aa).

In terms of domain architecture, tr-type G spans 10–204 (KPHVNVGTIG…ALDTYIPEPE (195 aa)). The G1 stretch occupies residues 19–26 (GHVDHGKT). 19 to 26 (GHVDHGKT) contacts GTP. Mg(2+) is bound at residue Thr-26. The interval 60 to 64 (GITIN) is G2. The tract at residues 81-84 (DCPG) is G3. GTP is bound by residues 81–85 (DCPGH) and 136–139 (NKCD). The G4 stretch occupies residues 136-139 (NKCD). Residues 174–176 (SAL) are G5.

It belongs to the TRAFAC class translation factor GTPase superfamily. Classic translation factor GTPase family. EF-Tu/EF-1A subfamily. In terms of assembly, monomer.

The protein resides in the cytoplasm. The enzyme catalyses GTP + H2O = GDP + phosphate + H(+). Its function is as follows. GTP hydrolase that promotes the GTP-dependent binding of aminoacyl-tRNA to the A-site of ribosomes during protein biosynthesis. The protein is Elongation factor Tu of Colwellia psychrerythraea (strain 34H / ATCC BAA-681) (Vibrio psychroerythus).